The following is a 299-amino-acid chain: Protein sprouty homolog 4 (299 aa).

An N-acetylmethionine modification is found at Met-1. Disordered stretches follow at residues 55-79 (NPSL…PTPA) and 92-126 (FSGR…QASP). Low complexity predominate over residues 92-107 (FSGRPSSVSSSSSTSS). Ser-125 carries the phosphoserine modification. The SPR domain occupies 166 to 273 (KCKECASPRT…GYDRLRRPGC (108 aa)). Positions 181 to 299 (VCNQECLCSA…AKTSRPDKPF (119 aa)) are required for interaction with TESK1. Required for colocalization with TESK1 at vesicular spots in the cytoplasm and inhibition of TESK1 kinase activity, resulting in inhibition of cell spreading.

It belongs to the sprouty family. Interacts (via C-terminus) with TESK1 (via both C- and N-termini); the interaction inhibits TESK1 kinase activity. Interacts with RAF1. Interacts with CAV1 (via C-terminus).

It localises to the cytoplasm. Its subcellular location is the cell projection. It is found in the ruffle membrane. Its function is as follows. Suppresses the insulin receptor and EGFR-transduced MAPK signaling pathway, but does not inhibit MAPK activation by a constitutively active mutant Ras. Probably impairs the formation of GTP-Ras. Inhibits Ras-independent, but not Ras-dependent, activation of RAF1. Represses integrin-mediated cell spreading via inhibition of TESK1-mediated phosphorylation of cofilin. The protein is Protein sprouty homolog 4 (SPRY4) of Homo sapiens (Human).